Here is a 211-residue protein sequence, read N- to C-terminus: Adenylate kinase (211 aa).

An ATP-binding site is contributed by 13 to 18 (GAGKGT). Residues 33–62 (STGDILRVAVANKTKLGLEAKKFMDAGQLV) are NMP. AMP-binding positions include Thr34, Arg39, 60 to 62 (QLV), 88 to 91 (GFPR), and Gln95. The segment at 129–161 (GRRTSKVTGKIYHIKFNPPVDEKPEDLVQRADD) is LID. Residues Arg130 and 139 to 140 (IY) each bind ATP. Residues Arg158 and Arg169 each coordinate AMP. Lys197 is an ATP binding site.

This sequence belongs to the adenylate kinase family. As to quaternary structure, monomer.

The protein localises to the cytoplasm. It catalyses the reaction AMP + ATP = 2 ADP. It participates in purine metabolism; AMP biosynthesis via salvage pathway; AMP from ADP: step 1/1. Functionally, catalyzes the reversible transfer of the terminal phosphate group between ATP and AMP. Plays an important role in cellular energy homeostasis and in adenine nucleotide metabolism. The sequence is that of Adenylate kinase from Fusobacterium nucleatum subsp. nucleatum (strain ATCC 25586 / DSM 15643 / BCRC 10681 / CIP 101130 / JCM 8532 / KCTC 2640 / LMG 13131 / VPI 4355).